A 166-amino-acid chain; its full sequence is Lipoprotein signal peptidase (166 aa).

The next 3 helical transmembrane spans lie at 10 to 30 (LIWLLLSALVIGLDQWSKAWV), 68 to 88 (WQLWFFTALAMGISGLLAFWL), and 94 to 114 (GHWRSALPYALVIGGAIGNVI). Catalysis depends on residues Asp-124 and Asp-142. A helical transmembrane segment spans residues 138–158 (FNIADSAIVGGAIGIAVFGLF).

The protein belongs to the peptidase A8 family.

The protein resides in the cell inner membrane. The catalysed reaction is Release of signal peptides from bacterial membrane prolipoproteins. Hydrolyzes -Xaa-Yaa-Zaa-|-(S,diacylglyceryl)Cys-, in which Xaa is hydrophobic (preferably Leu), and Yaa (Ala or Ser) and Zaa (Gly or Ala) have small, neutral side chains.. It participates in protein modification; lipoprotein biosynthesis (signal peptide cleavage). In terms of biological role, this protein specifically catalyzes the removal of signal peptides from prolipoproteins. The protein is Lipoprotein signal peptidase of Xanthomonas oryzae pv. oryzae (strain MAFF 311018).